Here is a 113-residue protein sequence, read N- to C-terminus: MRLISLLLFVLLLAIQYPLWLGKGGWLRVWDLNRQVNEQTVHNQALKLRNAKLEGEVKDLQDGTGAIEERARYELGMVKDGEVFVQFVAPAPKVSATPPLPPPPNSVAGRGGH.

At 1-3 (MRL) the chain is on the cytoplasmic side. The helical transmembrane segment at 4-21 (ISLLLFVLLLAIQYPLWL) threads the bilayer. Residues 22-113 (GKGGWLRVWD…PNSVAGRGGH (92 aa)) are Periplasmic-facing. Residues 34 to 64 (RQVNEQTVHNQALKLRNAKLEGEVKDLQDGT) are a coiled coil. The interval 93–113 (KVSATPPLPPPPNSVAGRGGH) is disordered.

Belongs to the FtsB family. As to quaternary structure, part of a complex composed of FtsB, FtsL and FtsQ.

It is found in the cell inner membrane. In terms of biological role, essential cell division protein. May link together the upstream cell division proteins, which are predominantly cytoplasmic, with the downstream cell division proteins, which are predominantly periplasmic. The chain is Cell division protein FtsB from Cupriavidus metallidurans (strain ATCC 43123 / DSM 2839 / NBRC 102507 / CH34) (Ralstonia metallidurans).